A 962-amino-acid chain; its full sequence is Rho GTPase-activating protein syd-1 (962 aa).

3 disordered regions span residues 231–367, 397–419, and 437–471; these read GKKS…MRSD, PRTLRQPNDSNKSNSLPRRRIMT, and CGEESDGAISAPEYSSPPFSRLTQQQQFRLSNGSP. Composition is skewed to polar residues over residues 243–261, 323–345, 401–412, and 453–471; these read NATTTSTMRAAHASTSSPR, SFNSAPGVSSSAPMYTLPRSSTA, RQPNDSNKSNSL, and PPFSRLTQQQQFRLSNGSP. Positions 572-696 constitute a C2 domain; that stretch reads RAAGPGINVD…NDDRVFALNL (125 aa). The Rho-GAP domain occupies 729–923; that stretch reads VPLGRLVQRE…LDMNQASSSL (195 aa). Residues 934-947 show a composition bias toward polar residues; sequence VNSESGSDSPATSG. Positions 934 to 962 are disordered; sequence VNSESGSDSPATSGQKGGGGVSYVSESQC.

It localises to the synapse. Probable GTPase activator for the Rho-type GTPases by converting them to an inactive GDP-bound state. Regulates the localization and assembly of presynaptic components during presynaptic development and is required for specifying the identity of axons during initial polarity acquisition. In these roles it is thought to act cell autonomously downstream of syg-1 and syg-2 and upstream of syd-2, possibly as a positive regulator of the latter. Required for the control of movement, egg-laying and the correct localization of elks-1. This chain is Rho GTPase-activating protein syd-1, found in Caenorhabditis briggsae.